A 358-amino-acid polypeptide reads, in one-letter code: Biotin synthase (358 aa).

Positions 50-277 (NEVQVSTLCS…KSHVRLSAGR (228 aa)) constitute a Radical SAM core domain. 3 residues coordinate [4Fe-4S] cluster: C65, C69, and C72. [2Fe-2S] cluster contacts are provided by C109, C140, C200, and R272.

Belongs to the radical SAM superfamily. Biotin synthase family. Homodimer. The cofactor is [4Fe-4S] cluster. Requires [2Fe-2S] cluster as cofactor.

It catalyses the reaction (4R,5S)-dethiobiotin + (sulfur carrier)-SH + 2 reduced [2Fe-2S]-[ferredoxin] + 2 S-adenosyl-L-methionine = (sulfur carrier)-H + biotin + 2 5'-deoxyadenosine + 2 L-methionine + 2 oxidized [2Fe-2S]-[ferredoxin]. It participates in cofactor biosynthesis; biotin biosynthesis; biotin from 7,8-diaminononanoate: step 2/2. Its function is as follows. Catalyzes the conversion of dethiobiotin (DTB) to biotin by the insertion of a sulfur atom into dethiobiotin via a radical-based mechanism. The sequence is that of Biotin synthase from Cellvibrio japonicus (strain Ueda107) (Pseudomonas fluorescens subsp. cellulosa).